The sequence spans 292 residues: Shikimate dehydrogenase (NADP(+)) (292 aa).

Residues 22 to 24 and Ser69 each bind shikimate; that span reads SLS. Lys73 (proton acceptor) is an active-site residue. The shikimate site is built by Asn94 and Asp111. NADP(+) is bound by residues 135-139 and Ile236; that span reads GVGGA. Residue Tyr238 coordinates shikimate. NADP(+) is bound at residue Gly260.

The protein belongs to the shikimate dehydrogenase family. As to quaternary structure, homodimer.

It carries out the reaction shikimate + NADP(+) = 3-dehydroshikimate + NADPH + H(+). Its pathway is metabolic intermediate biosynthesis; chorismate biosynthesis; chorismate from D-erythrose 4-phosphate and phosphoenolpyruvate: step 4/7. Involved in the biosynthesis of the chorismate, which leads to the biosynthesis of aromatic amino acids. Catalyzes the reversible NADPH linked reduction of 3-dehydroshikimate (DHSA) to yield shikimate (SA). The chain is Shikimate dehydrogenase (NADP(+)) from Streptococcus pyogenes serotype M18 (strain MGAS8232).